A 234-amino-acid chain; its full sequence is Potassium/proton antiporter CemA (234 aa).

Transmembrane regions (helical) follow at residues 8-28 (IPLR…WIPL), 117-137 (TICF…LFIL), 157-177 (ILFV…ELLI), and 193-213 (IILS…FKYW).

This sequence belongs to the CemA family.

It localises to the plastid. Its subcellular location is the chloroplast inner membrane. The catalysed reaction is K(+)(in) + H(+)(out) = K(+)(out) + H(+)(in). In terms of biological role, contributes to K(+)/H(+) antiport activity by supporting proton efflux to control proton extrusion and homeostasis in chloroplasts in a light-dependent manner to modulate photosynthesis. Prevents excessive induction of non-photochemical quenching (NPQ) under continuous-light conditions. Indirectly promotes efficient inorganic carbon uptake into chloroplasts. This chain is Potassium/proton antiporter CemA, found in Citrus sinensis (Sweet orange).